Consider the following 175-residue polypeptide: Peptide deformylase (175 aa).

Cysteine 92 and histidine 134 together coordinate Fe cation. Residue glutamate 135 is part of the active site. Residue histidine 138 participates in Fe cation binding.

This sequence belongs to the polypeptide deformylase family. Fe(2+) is required as a cofactor.

The enzyme catalyses N-terminal N-formyl-L-methionyl-[peptide] + H2O = N-terminal L-methionyl-[peptide] + formate. In terms of biological role, removes the formyl group from the N-terminal Met of newly synthesized proteins. Requires at least a dipeptide for an efficient rate of reaction. N-terminal L-methionine is a prerequisite for activity but the enzyme has broad specificity at other positions. The polypeptide is Peptide deformylase (Blochmanniella floridana).